A 570-amino-acid polypeptide reads, in one-letter code: Hydroxylamine reductase (570 aa).

[4Fe-4S] cluster-binding residues include cysteine 5, cysteine 8, cysteine 17, and cysteine 23. Hybrid [4Fe-2O-2S] cluster is bound by residues histidine 266, glutamate 290, cysteine 334, cysteine 425, cysteine 453, cysteine 478, glutamate 513, and lysine 515. A Cysteine persulfide modification is found at cysteine 425.

It belongs to the HCP family. It depends on [4Fe-4S] cluster as a cofactor. Hybrid [4Fe-2O-2S] cluster serves as cofactor.

The protein resides in the cytoplasm. It catalyses the reaction A + NH4(+) + H2O = hydroxylamine + AH2 + H(+). Functionally, catalyzes the reduction of hydroxylamine to form NH(3) and H(2)O. The polypeptide is Hydroxylamine reductase (Clostridium botulinum (strain Langeland / NCTC 10281 / Type F)).